The chain runs to 526 residues: Peptide chain release factor 3 (526 aa).

The 267-residue stretch at Ser11–Leu277 folds into the tr-type G domain. GTP is bound by residues Ser20–Thr27, Asp88–His92, and Asn142–Asp145.

Belongs to the TRAFAC class translation factor GTPase superfamily. Classic translation factor GTPase family. PrfC subfamily.

It is found in the cytoplasm. In terms of biological role, increases the formation of ribosomal termination complexes and stimulates activities of RF-1 and RF-2. It binds guanine nucleotides and has strong preference for UGA stop codons. It may interact directly with the ribosome. The stimulation of RF-1 and RF-2 is significantly reduced by GTP and GDP, but not by GMP. This Buchnera aphidicola subsp. Acyrthosiphon pisum (strain 5A) protein is Peptide chain release factor 3.